A 693-amino-acid polypeptide reads, in one-letter code: Polyribonucleotide nucleotidyltransferase (693 aa).

Mg(2+)-binding residues include aspartate 486 and aspartate 492. The KH domain occupies 553 to 612; that stretch reads PRIHTIKINPEKIKDVIGKGGSVIRMLTEETGTTIEIEDDGTVKISAVMQEKAKCAIQRI. One can recognise an S1 motif domain in the interval 622–690; it reads GSVYTGKVTR…RQGRLRLSIK (69 aa).

The protein belongs to the polyribonucleotide nucleotidyltransferase family. In terms of assembly, component of the RNA degradosome, which is a multiprotein complex involved in RNA processing and mRNA degradation. Requires Mg(2+) as cofactor.

The protein resides in the cytoplasm. The enzyme catalyses RNA(n+1) + phosphate = RNA(n) + a ribonucleoside 5'-diphosphate. Functionally, involved in mRNA degradation. Catalyzes the phosphorolysis of single-stranded polyribonucleotides processively in the 3'- to 5'-direction. The sequence is that of Polyribonucleotide nucleotidyltransferase from Buchnera aphidicola subsp. Baizongia pistaciae (strain Bp).